A 368-amino-acid polypeptide reads, in one-letter code: Forkhead box protein I2 (368 aa).

The segment at 33 to 54 (QNQQLPQRPAAPPALGYGRNEY) is disordered. Positions 124–218 (RPPYSYSSLI…DNGNFRRKRK (95 aa)) form a DNA-binding region, fork-head. The interval 243–272 (SLGSDSPRGASALEQSSYGTPESKSRPAGG) is disordered. Polar residues predominate over residues 255 to 264 (LEQSSYGTPE).

The protein resides in the nucleus. Possible transcriptional activator. In Xenopus tropicalis (Western clawed frog), this protein is Forkhead box protein I2.